Reading from the N-terminus, the 342-residue chain is D-erythrose-4-phosphate dehydrogenase (342 aa).

Residue 11–12 (RV) participates in NAD(+) binding. Residues 153-155 (SCT), Arg199, 212-213 (TK), and Arg235 each bind substrate. The active-site Nucleophile is Cys154. Residue Asn317 coordinates NAD(+).

It belongs to the glyceraldehyde-3-phosphate dehydrogenase family. Epd subfamily. Homotetramer.

It is found in the cytoplasm. The enzyme catalyses D-erythrose 4-phosphate + NAD(+) + H2O = 4-phospho-D-erythronate + NADH + 2 H(+). Its pathway is cofactor biosynthesis; pyridoxine 5'-phosphate biosynthesis; pyridoxine 5'-phosphate from D-erythrose 4-phosphate: step 1/5. Catalyzes the NAD-dependent conversion of D-erythrose 4-phosphate to 4-phosphoerythronate. This chain is D-erythrose-4-phosphate dehydrogenase, found in Pseudoalteromonas atlantica (strain T6c / ATCC BAA-1087).